Here is a 232-residue protein sequence, read N- to C-terminus: tRNA (guanine-N(7)-)-methyltransferase (232 aa).

Residues Glu63, Glu88, Asp115, and Asp137 each contribute to the S-adenosyl-L-methionine site. Asp137 is a catalytic residue. Substrate-binding positions include Lys141, Asp173, and 211-214; that span reads TRYE.

This sequence belongs to the class I-like SAM-binding methyltransferase superfamily. TrmB family.

The enzyme catalyses guanosine(46) in tRNA + S-adenosyl-L-methionine = N(7)-methylguanosine(46) in tRNA + S-adenosyl-L-homocysteine. It functions in the pathway tRNA modification; N(7)-methylguanine-tRNA biosynthesis. In terms of biological role, catalyzes the formation of N(7)-methylguanine at position 46 (m7G46) in tRNA. The polypeptide is tRNA (guanine-N(7)-)-methyltransferase (Chelativorans sp. (strain BNC1)).